A 290-amino-acid polypeptide reads, in one-letter code: MRIADYSVTKAVLERHGFTFKKSFGQNFLTDTNILQKIVDTAEIDDQVNVIEIGPGIGALTEFLAERAAQVMAFEIDHRLMPILADTLRDFDNVTVVNEDILKVDLAQHIQNFKNPNLPIKVVANLPYYITTPILMHLIESGIPFCEFVVMMQKEVADRISAQPNTKAYGSLSIAVQYYMTAKVAFIVPRTVFVPAPNVDSAILKMVRRPEPAVAVEDENFFFKVSKASFTHRRKTLWNNLTGYFGKTEEVKDKLTKALDQAGLSPSVRGEALSLAEFAGLADALKGQGL.

6 residues coordinate S-adenosyl-L-methionine: asparagine 27, leucine 29, glycine 54, glutamate 75, aspartate 100, and asparagine 125.

The protein belongs to the class I-like SAM-binding methyltransferase superfamily. rRNA adenine N(6)-methyltransferase family. RsmA subfamily.

It is found in the cytoplasm. It catalyses the reaction adenosine(1518)/adenosine(1519) in 16S rRNA + 4 S-adenosyl-L-methionine = N(6)-dimethyladenosine(1518)/N(6)-dimethyladenosine(1519) in 16S rRNA + 4 S-adenosyl-L-homocysteine + 4 H(+). Specifically dimethylates two adjacent adenosines (A1518 and A1519) in the loop of a conserved hairpin near the 3'-end of 16S rRNA in the 30S particle. May play a critical role in biogenesis of 30S subunits. The protein is Ribosomal RNA small subunit methyltransferase A of Streptococcus pneumoniae (strain JJA).